The chain runs to 288 residues: ATP synthase subunit a (288 aa).

Helical transmembrane passes span 47-67 (LDSMLWSIGLGIVFCALFWLV), 104-124 (LIAPLALTIFVWIFLMNLMDL), 157-177 (DPNITLGMSFSVFALIIYYSI), 199-219 (PIAKIILIPINFILEFVTLIA), 237-257 (LIFVLIALMPFWIQWALSVPW), and 258-278 (AIFHILIITLQAFVFMMLTIV).

It belongs to the ATPase A chain family. In terms of assembly, F-type ATPases have 2 components, CF(1) - the catalytic core - and CF(0) - the membrane proton channel. CF(1) has five subunits: alpha(3), beta(3), gamma(1), delta(1), epsilon(1). CF(0) has three main subunits: a(1), b(2) and c(9-12). The alpha and beta chains form an alternating ring which encloses part of the gamma chain. CF(1) is attached to CF(0) by a central stalk formed by the gamma and epsilon chains, while a peripheral stalk is formed by the delta and b chains.

It is found in the cell inner membrane. In terms of biological role, key component of the proton channel; it plays a direct role in the translocation of protons across the membrane. The chain is ATP synthase subunit a from Psychrobacter sp. (strain PRwf-1).